The sequence spans 411 residues: Tubulin beta-2 chain (411 aa).

Glu-37, Ser-106, Gly-110, Thr-111, Gly-112, Asn-172, and Asn-194 together coordinate GTP. Residue Glu-37 participates in Mg(2+) binding. Residues 392 to 411 form a disordered region; it reads QYQDATAEPEGXYEEDYDEA. Positions 402–411 are enriched in acidic residues; sequence GXYEEDYDEA.

It belongs to the tubulin family. Dimer of alpha and beta chains. A typical microtubule is a hollow water-filled tube with an outer diameter of 25 nm and an inner diameter of 15 nM. Alpha-beta heterodimers associate head-to-tail to form protofilaments running lengthwise along the microtubule wall with the beta-tubulin subunit facing the microtubule plus end conferring a structural polarity. Microtubules usually have 13 protofilaments but different protofilament numbers can be found in some organisms and specialized cells. Mg(2+) is required as a cofactor.

It is found in the cytoplasm. The protein resides in the cytoskeleton. Tubulin is the major constituent of microtubules, a cylinder consisting of laterally associated linear protofilaments composed of alpha- and beta-tubulin heterodimers. Microtubules grow by the addition of GTP-tubulin dimers to the microtubule end, where a stabilizing cap forms. Below the cap, tubulin dimers are in GDP-bound state, owing to GTPase activity of alpha-tubulin. The sequence is that of Tubulin beta-2 chain (TUBB2) from Anemia phyllitidis (Fern).